An 85-amino-acid polypeptide reads, in one-letter code: Large ribosomal subunit protein bL27 (85 aa).

Residues 1–21 (MAHKKGVGSSKNGRESESKRL) form a disordered region.

Belongs to the bacterial ribosomal protein bL27 family.

The chain is Large ribosomal subunit protein bL27 from Porphyromonas gingivalis (strain ATCC 33277 / DSM 20709 / CIP 103683 / JCM 12257 / NCTC 11834 / 2561).